The chain runs to 300 residues: Mitochondrial carnitine/acylcarnitine carrier-like protein (300 aa).

Solcar repeat units follow at residues 2–93 (ADAW…MEGL), 102–201 (LTIS…FKRF), and 211–298 (LGQG…TRSS). Transmembrane regions (helical) follow at residues 8-28 (LASG…FDTI), 64-84 (GLYK…AVLF), 108-128 (FVAG…TELI), 176-195 (GLFP…FAAY), 211-231 (LGQG…WGIV), and 273-292 (GFGP…FLAY).

This sequence belongs to the mitochondrial carrier (TC 2.A.29) family. As to expression, high expression in cotyledons, leaves, flowers and developing siliques. Lower expression in roots and maturing siliques. Not detected in meristematic tissues.

It localises to the mitochondrion inner membrane. Functionally, involved in photorespiratory metabolism. Acts probably as a carrier for a glycine decarboxylase (GDC) cofactor or, alternatively, may act as a mitochondrial glycine shuttle. Involved in the transition from the embryonic stage to the juvenile autotrophic stage. The protein is Mitochondrial carnitine/acylcarnitine carrier-like protein (BOU) of Arabidopsis thaliana (Mouse-ear cress).